The sequence spans 574 residues: Golgin subfamily A member 6-like protein 4 (574 aa).

Pro residues predominate over residues 1 to 11 (MWPQPRFPPHP). 2 disordered regions span residues 1 to 77 (MWPQ…YGEG) and 491 to 552 (KELK…AAGG). The span at 51–62 (NGSSPDTATSGG) shows a compositional bias: polar residues. A coiled-coil region spans residues 157–496 (SKVEQLQDET…EQQVKELKKS (340 aa)). Basic and acidic residues predominate over residues 491 to 504 (KELKKSGGAEEPRG). The span at 508–523 (AAAARPVAGAPVPQGA) shows a compositional bias: low complexity.

Belongs to the GOLGA6 family.

The polypeptide is Golgin subfamily A member 6-like protein 4 (GOLGA6L4) (Homo sapiens (Human)).